The chain runs to 55 residues: ATP synthase F(0) complex subunit 8 (55 aa).

The chain crosses the membrane as a helical span at residues 4-24 (LNPAPWFMIFMFTWAIFLTIL). A disordered region spans residues 34–55 (PNEPSPQGMTTPKTAPWNWPWH).

This sequence belongs to the ATPase protein 8 family. As to quaternary structure, component of the ATP synthase complex composed at least of ATP5F1A/subunit alpha, ATP5F1B/subunit beta, ATP5MC1/subunit c (homooctomer), MT-ATP6/subunit a, MT-ATP8/subunit 8, ATP5ME/subunit e, ATP5MF/subunit f, ATP5MG/subunit g, ATP5MK/subunit k, ATP5MJ/subunit j, ATP5F1C/subunit gamma, ATP5F1D/subunit delta, ATP5F1E/subunit epsilon, ATP5PF/subunit F6, ATP5PB/subunit b, ATP5PD/subunit d, ATP5PO/subunit OSCP. ATP synthase complex consists of a soluble F(1) head domain (subunits alpha(3) and beta(3)) - the catalytic core - and a membrane F(0) domain - the membrane proton channel (subunits c, a, 8, e, f, g, k and j). These two domains are linked by a central stalk (subunits gamma, delta, and epsilon) rotating inside the F1 region and a stationary peripheral stalk (subunits F6, b, d, and OSCP).

The protein localises to the mitochondrion membrane. In terms of biological role, subunit 8, of the mitochondrial membrane ATP synthase complex (F(1)F(0) ATP synthase or Complex V) that produces ATP from ADP in the presence of a proton gradient across the membrane which is generated by electron transport complexes of the respiratory chain. ATP synthase complex consist of a soluble F(1) head domain - the catalytic core - and a membrane F(1) domain - the membrane proton channel. These two domains are linked by a central stalk rotating inside the F(1) region and a stationary peripheral stalk. During catalysis, ATP synthesis in the catalytic domain of F(1) is coupled via a rotary mechanism of the central stalk subunits to proton translocation. In vivo, can only synthesize ATP although its ATP hydrolase activity can be activated artificially in vitro. Part of the complex F(0) domain. This is ATP synthase F(0) complex subunit 8 from Gadus morhua (Atlantic cod).